Reading from the N-terminus, the 485-residue chain is Glucagon receptor (485 aa).

The N-terminal stretch at 1–26 is a signal peptide; it reads MPLTQLHCPHLLLLLLVLSCLPEAPS. The Extracellular segment spans residues 27-137; that stretch reads AQVMDFLFEK…EIEVQKGVAK (111 aa). Intrachain disulfides connect Cys44/Cys68, Cys59/Cys101, and Cys82/Cys122. 5 N-linked (GlcNAc...) asparagine glycosylation sites follow: Asn47, Asn60, Asn75, Asn79, and Asn118. Residues 138 to 162 traverse the membrane as a helical segment; the sequence is MYSSQQVMYTVGYSLSLGALLLALV. Topologically, residues 163-174 are cytoplasmic; the sequence is ILLGLRKLHCTR. Residues 175-199 traverse the membrane as a helical segment; it reads NYIHGNLFASFVLKAGSVLVIDWLL. Topologically, residues 200–226 are extracellular; that stretch reads KTRYSQKIGDDLSVSVWLSDGAMAGCR. Cys225 and Cys295 are disulfide-bonded. Residues 227–250 traverse the membrane as a helical segment; it reads VATVIMQYGIIANYCWLLVEGVYL. Topologically, residues 251–264 are cytoplasmic; that stretch reads YSLLSLATFSERSF. The helical transmembrane segment at 265–286 threads the bilayer; sequence FSLYLGIGWGAPLLFVIPWVVV. At 287–304 the chain is on the extracellular side; that stretch reads KCLFENVQCWTSNDNMGF. The chain crosses the membrane as a helical span at residues 305–327; the sequence is WWILRIPVFLALLINFFIFVHII. The Cytoplasmic segment spans residues 328 to 351; sequence HLLVAKLRAHQMHYADYKFRLARS. The tract at residues 351–354 is important for allosteric inhibitor binding; sequence STLT. The chain crosses the membrane as a helical span at residues 352-370; sequence TLTLIPLLGVHEVVFAFVT. Residues 371–382 lie on the Extracellular side of the membrane; the sequence is DEHAQGTLRSTK. A helical membrane pass occupies residues 383 to 403; it reads LFFDLFLSSFQGLLVAVLYCF. The Cytoplasmic portion of the chain corresponds to 404–485; it reads LNKEVQAELM…SLPRLADSPT (82 aa). A compositionally biased stretch (polar residues) spans 457-475; it reads AGSSSGTGCVPSMETSLAS. The tract at residues 457 to 485 is disordered; that stretch reads AGSSSGTGCVPSMETSLASSLPRLADSPT. A phosphoserine mark is found at Ser460 and Ser476.

It belongs to the G-protein coupled receptor 2 family. Ligand-binding promotes phosphorylation of serine residues in the C-terminal cytoplasmic domain. Phosphorylation is important for receptor endocytosis after ligand-binding. As to expression, expressed predominantly in liver, kidney, adrenal, lung and stomach, while lower levels of expression are detected in brown and white adipose tissue, cerebellum, duodenum and heart.

Its subcellular location is the cell membrane. Its function is as follows. G-protein coupled receptor for glucagon that plays a central role in the regulation of blood glucose levels and glucose homeostasis. Regulates the rate of hepatic glucose production by promoting glycogen hydrolysis and gluconeogenesis. Plays an important role in mediating the responses to fasting. Ligand binding causes a conformation change that triggers signaling via guanine nucleotide-binding proteins (G proteins) and modulates the activity of down-stream effectors, such as adenylate cyclase. Promotes activation of adenylate cyclase. Besides, plays a role in signaling via a phosphatidylinositol-calcium second messenger system. This Mus musculus (Mouse) protein is Glucagon receptor (Gcgr).